Consider the following 99-residue polypeptide: uncharacterized protein (99 aa).

Residues 43–95 adopt a coiled-coil conformation; that stretch reads ENEEIYADQVRRIKLRLRELRETYATSEDNWRELMDNLEELRDQIERLAIRGG.

This is an uncharacterized protein from Archaeoglobus fulgidus (strain ATCC 49558 / DSM 4304 / JCM 9628 / NBRC 100126 / VC-16).